Consider the following 1484-residue polypeptide: Ral GTPase-activating protein subunit beta (1484 aa).

Disordered regions lie at residues 355 to 437 (PRSD…APRR) and 699 to 728 (ENNLKSHSRTNSGISSASGGSTEPTTPDSE). Phosphoserine is present on serine 359. Residues threonine 363 and threonine 379 each carry the phosphothreonine modification. Polar residues-rich tracts occupy residues 369–381 (SMPQSAAVNTTPP), 392–428 (NKATMKTSTVTTAHTSKVQHQASSTSPLSSPNQTSSE), and 701–725 (NLKSHSRTNSGISSASGGSTEPTTP). 2 positions are modified to phosphoserine: serine 421 and serine 710. Threonine 724 carries the post-translational modification Phosphothreonine. A Rap-GAP domain is found at 1138–1382 (IGYLDLLPCR…TTLEKEVPVI (245 aa)). Residue serine 1275 is modified to Phosphoserine. The segment at 1297–1325 (PNHTDSLNSSQRLSPSSRMKKLPQGRPVP) is disordered. The span at 1302–1313 (SLNSSQRLSPSS) shows a compositional bias: low complexity.

Component of the heterodimeric RalGAP1 complex with RALGAPA1 and of the heterodimeric RalGAP2 complex with RALGAPA2. Heterodimerization is required for activity. As to expression, abundantly expressed in testis, pancreas, lung, thymus, brown fat, and white fat. Expressed at lower levels in the brain.

Non-catalytic subunit of the heterodimeric RalGAP1 and RalGAP2 complexes which act as GTPase activators for the Ras-like small GTPases RALA and RALB. This chain is Ral GTPase-activating protein subunit beta (Ralgapb), found in Mus musculus (Mouse).